The following is a 602-amino-acid chain: Bifunctional lycopene cyclase/phytoene synthase (602 aa).

The tract at residues 1–238 is lycopene beta-cyclase; sequence MLTYMEVHLY…LVFASCATDR (238 aa). Transmembrane regions (helical) follow at residues 7 to 27, 35 to 55, 69 to 89, 110 to 130, 142 to 162, 173 to 193, and 211 to 231; these read VHLY…KPFF, YIFL…YIVY, VIGY…LITV, PVFQ…TIAA, PFYG…LWIG, AVLF…QYAI, and LPSL…VLVF. Residues 245-602 are phytoene synthase; that stretch reads IYITPMNHNK…RGKSQAFTVI (358 aa).

In the N-terminal section; belongs to the lycopene beta-cyclase family. The protein in the C-terminal section; belongs to the phytoene/squalene synthase family.

It is found in the membrane. The enzyme catalyses all-trans-lycopene = gamma-carotene. It catalyses the reaction gamma-carotene = all-trans-beta-carotene. It carries out the reaction 2 (2E,6E,10E)-geranylgeranyl diphosphate = 15-cis-phytoene + 2 diphosphate. It participates in carotenoid biosynthesis; beta-carotene biosynthesis. Its pathway is carotenoid biosynthesis; phytoene biosynthesis; all-trans-phytoene from geranylgeranyl diphosphate: step 1/1. Bifunctional enzyme that catalyzes the reactions from geranylgeranyl diphosphate to phytoene (phytoene synthase) and lycopene to beta-carotene via the intermediate gamma-carotene (lycopene cyclase). The polypeptide is Bifunctional lycopene cyclase/phytoene synthase (Phycomyces blakesleeanus (strain ATCC 8743b / DSM 1359 / FGSC 10004 / NBRC 33097 / NRRL 1555)).